The chain runs to 312 residues: Probable carboxylesterase 7 (312 aa).

Position 1 is an N-acetylmethionine (methionine 1). An Involved in the stabilization of the negatively charged intermediate by the formation of the oxyanion hole motif is present at residues 75–77 (HGG). Residues serine 159, aspartate 255, and histidine 287 contribute to the active site.

Belongs to the 'GDXG' lipolytic enzyme family. Expressed in leaves, stems, flowers and siliques.

The enzyme catalyses a carboxylic ester + H2O = an alcohol + a carboxylate + H(+). In terms of biological role, carboxylesterase acting on esters with varying acyl chain length. The sequence is that of Probable carboxylesterase 7 (CXE7) from Arabidopsis thaliana (Mouse-ear cress).